Here is a 323-residue protein sequence, read N- to C-terminus: Olfactory receptor 52B2 (323 aa).

Residues 1 to 27 lie on the Extracellular side of the membrane; sequence MSHTNVTIFHPAVFVLPGIPGLEAYHI. A glycan (N-linked (GlcNAc...) asparagine) is linked at N5. Residues 28–48 form a helical membrane-spanning segment; that stretch reads WLSIPLCLIYITAVLGNSILI. Residues 49–56 lie on the Cytoplasmic side of the membrane; the sequence is VVIVMERN. Residues 57–77 form a helical membrane-spanning segment; it reads LHVPMYFFLSMLAVMDILLST. Residues 78–101 are Extracellular-facing; the sequence is TTVPKALAIFWLQAHNIAFDACVT. C99 and C191 form a disulfide bridge. Residues 102–122 form a helical membrane-spanning segment; that stretch reads QGFFVHMMFVGESAILLAMAF. Topologically, residues 123–141 are cytoplasmic; that stretch reads DRFVAICAPLRYTTVLTWP. The helical transmembrane segment at 142–162 threads the bilayer; that stretch reads VVGRIALAVITRSFCIIFPVI. Topologically, residues 163 to 198 are extracellular; it reads FLLKRLPFCLTNIVPHSYCEHIGVARLACADITVNI. Residues 199 to 219 traverse the membrane as a helical segment; the sequence is WYGFSVPIVMVILDVILIAVS. At 220-239 the chain is on the cytoplasmic side; that stretch reads YSLILRAVFRLPSQDARHKA. The chain crosses the membrane as a helical span at residues 240–260; sequence LSTCGSHLCVILMFYVPSFFT. Residues 261–275 are Extracellular-facing; the sequence is LLTHHFGRNIPQHVH. A helical membrane pass occupies residues 276–296; that stretch reads ILLANLYVAVPPMLNPIVYGV. Topologically, residues 297–323 are cytoplasmic; sequence KTKQIREGVAHRFFDIKTWCCTSPLGS.

It belongs to the G-protein coupled receptor 1 family.

Its subcellular location is the cell membrane. In terms of biological role, odorant receptor. The polypeptide is Olfactory receptor 52B2 (OR52B2) (Homo sapiens (Human)).